The sequence spans 1065 residues: Exportin-T (1065 aa).

The protein belongs to the exportin family.

It localises to the nucleus. The protein resides in the cytoplasm. Functionally, tRNA nucleus export receptor which facilitates tRNA translocation across the nuclear pore complex. Involved in pre-tRNA splicing, probably by affecting the interaction of pre-tRNA with splicing endonuclease. This Coprinopsis cinerea (strain Okayama-7 / 130 / ATCC MYA-4618 / FGSC 9003) (Inky cap fungus) protein is Exportin-T (LOS1).